Here is a 339-residue protein sequence, read N- to C-terminus: uncharacterized protein (339 aa).

A compositionally biased stretch (polar residues) spans 1-12 (MDIDLNNQTDNN). Residues 1–30 (MDIDLNNQTDNNELIVEDTENPKNPNSTNI) form a disordered region.

This is an uncharacterized protein from Acanthamoeba polyphaga (Amoeba).